The following is a 533-amino-acid chain: Probable nucleolar protein 5-1 (533 aa).

The region spanning 280–398 (IAPNLTALVG…LEARLRTLEG (119 aa)) is the Nop domain. A disordered region spans residues 402 to 533 (GRLSGSAKGK…EKKKKKKTEV (132 aa)). Basic and acidic residues predominate over residues 412 to 423 (PKIEVYDKDKKK). Polar residues predominate over residues 433–450 (KTYNTAADSLLQTPTVDS). Basic and acidic residues-rich tracts occupy residues 474–489 (TEEP…KTEA) and 515–524 (MPAKKKEKSE).

Belongs to the NOP5/NOP56 family.

The protein resides in the nucleus. The protein localises to the nucleolus. Its function is as follows. Required for 60S ribosomal subunit biogenesis. The chain is Probable nucleolar protein 5-1 (NOP5-1) from Arabidopsis thaliana (Mouse-ear cress).